The following is a 300-amino-acid chain: Energy-coupling factor transporter ATP-binding protein EcfA2 (300 aa).

The ABC transporter domain occupies 3 to 258 (IKAKNIVKIY…NKFLIENKML (256 aa)). 40 to 47 (GQTGSGKT) is an ATP binding site.

It belongs to the ABC transporter superfamily. Energy-coupling factor EcfA family. In terms of assembly, forms a stable energy-coupling factor (ECF) transporter complex composed of 2 membrane-embedded substrate-binding proteins (S component), 2 ATP-binding proteins (A component) and 2 transmembrane proteins (T component).

The protein localises to the cell membrane. In terms of biological role, ATP-binding (A) component of a common energy-coupling factor (ECF) ABC-transporter complex. Unlike classic ABC transporters this ECF transporter provides the energy necessary to transport a number of different substrates. The polypeptide is Energy-coupling factor transporter ATP-binding protein EcfA2 (Mesomycoplasma hyopneumoniae (strain 7448) (Mycoplasma hyopneumoniae)).